Reading from the N-terminus, the 258-residue chain is MNVTASLSRRPLGCLKAGLCQSLIRGYATAVAASTTQSTGALPDHNFFRIADKHTKKTRTAFAVFTPPKSPTTLPPSSVVTKSKAFKIANSKLPPLMTKPPSDPMPLLTQQQIARMDPTGARTALFSKARHAARVGDVLMVTHRRGGEPFAGVCLAIRRSGIDTAILLRNHLGKVGVEMWYKIYNKNVAGIEIIKRRAKRARRAKLMYMRQPKHDMGSVEQYVFAWKKMRKVLSSKGLTGGVGGGGGKQKGQESKKKN.

Positions 235 to 258 (SKGLTGGVGGGGGKQKGQESKKKN) are disordered. Positions 238 to 249 (LTGGVGGGGGKQ) are enriched in gly residues.

Belongs to the bacterial ribosomal protein bL19 family. As to quaternary structure, component of the mitochondrial large ribosomal subunit (mt-LSU). Mature N.crassa 74S mitochondrial ribosomes consist of a small (37S) and a large (54S) subunit. The 37S small subunit contains a 16S ribosomal RNA (16S mt-rRNA) and 32 different proteins. The 54S large subunit contains a 23S rRNA (23S mt-rRNA) and 42 different proteins.

Its subcellular location is the mitochondrion. In terms of biological role, component of the mitochondrial ribosome (mitoribosome), a dedicated translation machinery responsible for the synthesis of mitochondrial genome-encoded proteins, including at least some of the essential transmembrane subunits of the mitochondrial respiratory chain. The mitoribosomes are attached to the mitochondrial inner membrane and translation products are cotranslationally integrated into the membrane. The polypeptide is Large ribosomal subunit protein bL19m (img1) (Neurospora crassa (strain ATCC 24698 / 74-OR23-1A / CBS 708.71 / DSM 1257 / FGSC 987)).